Consider the following 435-residue polypeptide: Glutamate-1-semialdehyde 2,1-aminomutase (435 aa).

N6-(pyridoxal phosphate)lysine is present on Lys266.

The protein belongs to the class-III pyridoxal-phosphate-dependent aminotransferase family. HemL subfamily. In terms of assembly, homodimer. Pyridoxal 5'-phosphate is required as a cofactor.

The protein localises to the cytoplasm. It catalyses the reaction (S)-4-amino-5-oxopentanoate = 5-aminolevulinate. The protein operates within porphyrin-containing compound metabolism; protoporphyrin-IX biosynthesis; 5-aminolevulinate from L-glutamyl-tRNA(Glu): step 2/2. In Coxiella burnetii (strain CbuK_Q154) (Coxiella burnetii (strain Q154)), this protein is Glutamate-1-semialdehyde 2,1-aminomutase.